The sequence spans 1497 residues: Dual oxidase 1 (1497 aa).

The first 21 residues, 1 to 21, serve as a signal peptide directing secretion; it reads MRSKHVLYIAILFSSIFGGKG. Residues 22-587 lie on the Extracellular side of the membrane; sequence IQQNEEFQRY…MQSTYWTDND (566 aa). The segment at 26–590 is peroxidase-like; mediates peroxidase activity; it reads EEFQRYDGWY…TYWTDNDTTY (565 aa). Residues N66, N305, N567, and N586 are each glycosylated (N-linked (GlcNAc...) asparagine). The helical transmembrane segment at 588 to 608 threads the bilayer; that stretch reads TTYVFTLIGLACVPLICYGIG. The Cytoplasmic portion of the chain corresponds to 609–986; sequence RYLVNRRIAI…VSAFLETYRQ (378 aa). EF-hand domains follow at residues 817–852 and 853–888; these read ANNEFVKRMFAMTAKHNEDSLSFNEFLTVLREFVNA and PQKQKLQTLFKMCDLEGKNKVLRKDLAELVKSLNQT. A helical membrane pass occupies residues 987–1007; that stretch reads HVFIVFCFVAINLVLFFERFW. The Extracellular segment spans residues 1008–1024; the sequence is HYRYMAENRDLRRVMGA. A helical membrane pass occupies residues 1025–1045; that stretch reads GIAITRGAAGALSFCMALILL. The Ferric oxidoreductase domain maps to 1030-1210; that stretch reads RGAAGALSFC…FVIDRIIGLM (181 aa). Residues 1046–1068 lie on the Cytoplasmic side of the membrane; that stretch reads TVCRNIITLLRETVIAQYIPFDS. The chain crosses the membrane as a helical span at residues 1069–1089; sequence AIAFHKIVALFAAFWATLHTV. The Extracellular segment spans residues 1090 to 1134; it reads GHCVNFYHVGTQSQEGLACLFQEAFFGSNFLPSISYWFFSTITGL. Residues 1135-1155 traverse the membrane as a helical segment; that stretch reads TGIALVAVMCIIYVFALPCFI. Residues 1156-1163 are Cytoplasmic-facing; it reads KRAYHAFR. Residues 1164 to 1184 form a helical membrane-spanning segment; it reads LTHLLNIAFYALTLLHGLPKL. Topologically, residues 1185–1189 are extracellular; it reads LDSPK. Residues 1190-1210 form a helical membrane-spanning segment; that stretch reads FGYYVVGPIVLFVIDRIIGLM. The 108-residue stretch at 1211 to 1318 folds into the FAD-binding FR-type domain; that stretch reads QYYKKLEIVN…KGPYGDGNQE (108 aa). Residues 1211-1497 are Cytoplasmic-facing; it reads QYYKKLEIVN…PSFAHRFETF (287 aa).

It in the N-terminal section; belongs to the peroxidase family. In terms of assembly, interacts with doxa-1 and tsp-15. Interacts with rho-1. In terms of tissue distribution, expressed in hypodermal cells.

It localises to the membrane. It carries out the reaction NADH + O2 + H(+) = H2O2 + NAD(+). The catalysed reaction is NADPH + O2 + H(+) = H2O2 + NADP(+). Peroxidase activity is inhibited by aminobenzohydrazide. Plays a role in cuticle biogenesis. In complex with doxa-1 and tsp-15, produces reactive oxygen species (ROS), which are probably used by mlt-7 for tyrosine cross-linking, thus stabilizing cuticular extracellular matrix. May regulate the production of ROS by playing a role in modulating proline catabolism. Required in combination with mlt-7 for correct formation of cross-links in cuticle collagens. Association with the GTPase rho-1 promotes ROS production and this interaction may be modulated by memo-1, in order to control the oxidative stress response and longevity. The sequence is that of Dual oxidase 1 from Caenorhabditis elegans.